The primary structure comprises 170 residues: Lipoprotein signal peptidase (170 aa).

Helical transmembrane passes span 11–31, 41–61, 69–89, and 95–115; these read LGWL…KLHF, IVVI…AAFS, WQRW…VVWL, and NETW…GNLY. Residues D125 and D144 contribute to the active site. Residues 136–156 traverse the membrane as a helical segment; sequence YFPAFNFADSAITVGAVMLAL.

Belongs to the peptidase A8 family.

Its subcellular location is the cell inner membrane. The catalysed reaction is Release of signal peptides from bacterial membrane prolipoproteins. Hydrolyzes -Xaa-Yaa-Zaa-|-(S,diacylglyceryl)Cys-, in which Xaa is hydrophobic (preferably Leu), and Yaa (Ala or Ser) and Zaa (Gly or Ala) have small, neutral side chains.. It functions in the pathway protein modification; lipoprotein biosynthesis (signal peptide cleavage). Functionally, this protein specifically catalyzes the removal of signal peptides from prolipoproteins. The sequence is that of Lipoprotein signal peptidase from Pseudomonas fluorescens (strain ATCC BAA-477 / NRRL B-23932 / Pf-5).